Reading from the N-terminus, the 878-residue chain is Microtubule-associated protein homolog maph-1.1 (878 aa).

2 disordered regions span residues 224-425 (ALSD…AQAT) and 456-518 (EIPP…PVVP). Low complexity-rich tracts occupy residues 241-268 (PSARPATTTGTATRPTRPAVPAASAPRA), 278-293 (SRPTTTRNAAPAPRTA), 310-321 (APTRAPVPARSA), and 328-339 (APAKPAANTAKA). Composition is skewed to basic and acidic residues over residues 416–425 (PPRHEVAQAT) and 480–496 (EEDKIPEPVDAFKKPDP).

Belongs to the MAP1A/MAP1B/MAP1S family. Interacts with dlg-1.

It localises to the cell projection. Its subcellular location is the dendrite. The protein localises to the perikaryon. The protein resides in the axon. It is found in the cytoplasm. It localises to the cytoskeleton. The sequence is that of Microtubule-associated protein homolog maph-1.1 from Caenorhabditis elegans.